The following is an 884-amino-acid chain: Bifunctional heparan sulfate N-deacetylase/N-sulfotransferase 2 (884 aa).

Topologically, residues 1–18 are cytoplasmic; sequence MLKLWKVVRPARQLELHR. Residues 19–39 form a helical; Signal-anchor for type II membrane protein membrane-spanning segment; the sequence is LILLLIAFSLGSMGFLAYYVS. Residues 40–884 are Lumenal-facing; sequence TSPKAKEPLP…REELQHSSSG (845 aa). The interval 41-598 is heparan sulfate N-deacetylase 2; that stretch reads SPKAKEPLPL…KRHKDIWSKE (558 aa). The interval 49 to 82 is disordered; that stretch reads PLPLGDCSSSGAAGGPGPVRPPVPPRPPRPPETA. The segment covering 66-79 has biased composition (pro residues); it reads PVRPPVPPRPPRPP. 2 N-linked (GlcNAc...) asparagine glycosylation sites follow: N351 and N401. The interval 599–884 is heparan sulfate N-sulfotransferase 2; it reads KTCDRLPKFL…REELQHSSSG (286 aa). Catalysis depends on K614, which acts as the For sulfotransferase activity. 3'-phosphoadenylyl sulfate is bound at residue 614 to 618; it reads KTGTT. N-linked (GlcNAc...) asparagine glycosylation is present at N667. S712 contributes to the 3'-phosphoadenylyl sulfate binding site. Residues N727 and N803 are each glycosylated (N-linked (GlcNAc...) asparagine). Cysteines 818 and 828 form a disulfide. Position 833-837 (833-837) interacts with 3'-phosphoadenylyl sulfate; sequence KGRKY.

It belongs to the sulfotransferase 1 family. NDST subfamily. In terms of assembly, monomer.

It is found in the golgi apparatus membrane. It carries out the reaction alpha-D-glucosaminyl-[heparan sulfate](n) + 3'-phosphoadenylyl sulfate = N-sulfo-alpha-D-glucosaminyl-[heparan sulfate](n) + adenosine 3',5'-bisphosphate + 2 H(+). It functions in the pathway glycan metabolism; heparan sulfate biosynthesis. The protein operates within glycan metabolism; heparin biosynthesis. Functionally, essential bifunctional enzyme that catalyzes both the N-deacetylation and the N-sulfation of glucosamine (GlcNAc) of the glycosaminoglycan in heparan sulfate. Modifies the GlcNAc-GlcA disaccharide repeating sugar backbone to make N-sulfated heparosan, a prerequisite substrate for later modifications in heparin biosynthesis. Plays a role in determining the extent and pattern of sulfation of heparan sulfate. Required for the exosomal release of SDCBP, CD63 and syndecan. The protein is Bifunctional heparan sulfate N-deacetylase/N-sulfotransferase 2 (NDST2) of Bos taurus (Bovine).